The following is a 451-amino-acid chain: Chromosomal replication initiator protein DnaA (451 aa).

The interval 1–77 (MTENEQIFWN…EVYNAQISVD (77 aa)) is domain I, interacts with DnaA modulators. The segment at 77–110 (DYVFEEDLMIEQNQTKINQKPKQQALNSLPTVTS) is domain II. The segment at 111–329 (DLNPKYSFEN…GALKDISLVA (219 aa)) is domain III, AAA+ region. ATP is bound by residues Gly155, Gly157, Lys158, and Thr159. The domain IV, binds dsDNA stretch occupies residues 330–451 (NFKQIDTITV…EIETIKNKIK (122 aa)).

It belongs to the DnaA family. Oligomerizes as a right-handed, spiral filament on DNA at oriC.

It localises to the cytoplasm. Functionally, plays an essential role in the initiation and regulation of chromosomal replication. ATP-DnaA binds to the origin of replication (oriC) to initiate formation of the DNA replication initiation complex once per cell cycle. Binds the DnaA box (a 9 base pair repeat at the origin) and separates the double-stranded (ds)DNA. Forms a right-handed helical filament on oriC DNA; dsDNA binds to the exterior of the filament while single-stranded (ss)DNA is stabiized in the filament's interior. The ATP-DnaA-oriC complex binds and stabilizes one strand of the AT-rich DNA unwinding element (DUE), permitting loading of DNA polymerase. After initiation quickly degrades to an ADP-DnaA complex that is not apt for DNA replication. Binds acidic phospholipids. This Streptococcus pyogenes serotype M4 (strain MGAS10750) protein is Chromosomal replication initiator protein DnaA.